A 390-amino-acid polypeptide reads, in one-letter code: S-adenosylmethionine synthase 2 (390 aa).

Glu9 lines the Mg(2+) pocket. His15 is an ATP binding site. Glu43 provides a ligand contact to K(+). Residues Glu56 and Gln99 each coordinate L-methionine. ATP-binding positions include 167 to 169 (DGK), 235 to 238 (SGRF), Asp246, 252 to 253 (RK), Ala269, Lys273, and Lys277. L-methionine is bound at residue Asp246. Residue Lys277 coordinates L-methionine.

This sequence belongs to the AdoMet synthase family. As to quaternary structure, homotetramer. The cofactor is Mn(2+). Mg(2+) is required as a cofactor. It depends on Co(2+) as a cofactor. Requires K(+) as cofactor.

It localises to the cytoplasm. It carries out the reaction L-methionine + ATP + H2O = S-adenosyl-L-methionine + phosphate + diphosphate. It participates in amino-acid biosynthesis; S-adenosyl-L-methionine biosynthesis; S-adenosyl-L-methionine from L-methionine: step 1/1. Catalyzes the formation of S-adenosylmethionine from methionine and ATP. The reaction comprises two steps that are both catalyzed by the same enzyme: formation of S-adenosylmethionine (AdoMet) and triphosphate, and subsequent hydrolysis of the triphosphate. The chain is S-adenosylmethionine synthase 2 (SAM2) from Petunia hybrida (Petunia).